A 465-amino-acid polypeptide reads, in one-letter code: 3-isopropylmalate dehydratase large subunit (465 aa).

[4Fe-4S] cluster is bound by residues Cys-347, Cys-407, and Cys-410. Residues Asp-416–His-443 form a disordered region.

It belongs to the aconitase/IPM isomerase family. LeuC type 1 subfamily. In terms of assembly, heterodimer of LeuC and LeuD. It depends on [4Fe-4S] cluster as a cofactor.

It catalyses the reaction (2R,3S)-3-isopropylmalate = (2S)-2-isopropylmalate. The protein operates within amino-acid biosynthesis; L-leucine biosynthesis; L-leucine from 3-methyl-2-oxobutanoate: step 2/4. Catalyzes the isomerization between 2-isopropylmalate and 3-isopropylmalate, via the formation of 2-isopropylmaleate. In Frankia casuarinae (strain DSM 45818 / CECT 9043 / HFP020203 / CcI3), this protein is 3-isopropylmalate dehydratase large subunit.